A 787-amino-acid chain; its full sequence is DNA ligase (787 aa).

NAD(+)-binding positions include 32 to 36, 81 to 82, and Glu121; these read DVEYD and SL. The N6-AMP-lysine intermediate role is filled by Lys123. Residues Arg144, Glu181, Lys297, and Lys321 each contribute to the NAD(+) site. Zn(2+) contacts are provided by Cys415, Cys418, Cys445, and Cys451. Positions 703-787 constitute a BRCT domain; sequence VEGLPLAGQT…RLIELGVAVD (85 aa).

Belongs to the NAD-dependent DNA ligase family. LigA subfamily. Requires Mg(2+) as cofactor. It depends on Mn(2+) as a cofactor.

The catalysed reaction is NAD(+) + (deoxyribonucleotide)n-3'-hydroxyl + 5'-phospho-(deoxyribonucleotide)m = (deoxyribonucleotide)n+m + AMP + beta-nicotinamide D-nucleotide.. Functionally, DNA ligase that catalyzes the formation of phosphodiester linkages between 5'-phosphoryl and 3'-hydroxyl groups in double-stranded DNA using NAD as a coenzyme and as the energy source for the reaction. It is essential for DNA replication and repair of damaged DNA. The chain is DNA ligase from Pseudomonas syringae pv. syringae (strain B728a).